A 503-amino-acid polypeptide reads, in one-letter code: MALRAKAEVCMAAPWLSLQRARALGTRATRVPRTVLPFEAMPRRPGNRWLRLLQIWREQGYEHLHLEVHQTFQELGPIFRYDLGGAGMVCVMLPEDVEKLQQVDSLNPRRMSLEPWVAYRQHRGHKCGVFLLNGPEWRFNRLRLNPDVLSPKAVQRFLPMVDAVARDFSQALRKKVVQNARESVTLDIQPSIFHYTIEASNLALFGERLGLVGHSPSSASLSFLHALEVMFKSTVQLMFMPRSLSRWTSPKVWKEHFEAWDCIFQYGDNCIQKIYQELALSRPQQYTSIVAELLLNAELSPDAIKANSMELTAGSVDTTVFPLLMTLFELARNPNVQQALRQESLAAAASISEHPQKATTELPLLRAALKETLRLYPVGLFLERVVSSDLVLQNYHIPAGTLVRVFLYSLGRNPALFPRPERYNPQRWLDIRGSGRNFYHVPFGFGMRQCLGRRLAEAEMLLLLHHVLKHLQVETLTQEDIKMVYSFILRPSTFPLLTFRAIN.

The transit peptide at 1–24 (MALRAKAEVCMAAPWLSLQRARAL) directs the protein to the mitochondrion. Cys450 lines the heme pocket.

It belongs to the cytochrome P450 family. Heme is required as a cofactor.

The protein localises to the mitochondrion inner membrane. The catalysed reaction is a steroid + 2 reduced [adrenodoxin] + O2 + 2 H(+) = an 11beta-hydroxysteroid + 2 oxidized [adrenodoxin] + H2O. The enzyme catalyses 11-deoxycortisol + 2 reduced [adrenodoxin] + O2 + 2 H(+) = cortisol + 2 oxidized [adrenodoxin] + H2O. It catalyses the reaction 21-hydroxyprogesterone + 2 reduced [adrenodoxin] + O2 + 2 H(+) = corticosterone + 2 oxidized [adrenodoxin] + H2O. It carries out the reaction 21-hydroxyprogesterone + 2 reduced [adrenodoxin] + O2 + 2 H(+) = 18-hydroxy-11-deoxycorticosterone + 2 oxidized [adrenodoxin] + H2O. The catalysed reaction is 21-hydroxyprogesterone + 2 reduced [adrenodoxin] + O2 + 2 H(+) = 19-hydroxy-11-deoxycorticosterone + 2 oxidized [adrenodoxin] + H2O. The enzyme catalyses cortisol + 2 reduced [adrenodoxin] + O2 + 2 H(+) = 18-hydroxycortisol + 2 oxidized [adrenodoxin] + H2O. It catalyses the reaction 11-deoxycortisol + 2 reduced [adrenodoxin] + O2 + 2 H(+) = 18-hydroxy-11-deoxycortisol + 2 oxidized [adrenodoxin] + H2O. It participates in steroid biosynthesis; glucocorticoid biosynthesis. It functions in the pathway steroid hormone biosynthesis. Its function is as follows. A cytochrome P450 monooxygenase involved in the biosynthesis of adrenal corticoids. Catalyzes a variety of reactions that are essential for many species, including detoxification, defense, and the formation of endogenous chemicals like steroid hormones. Steroid 11beta, 18- and 19-hydroxylase with preferred regioselectivity at 11beta, then 18, and lastly 19. Catalyzes the hydroxylation of 11-deoxycortisol and 11-deoxycorticosterone (21-hydroxyprogesterone) at 11beta position, yielding cortisol or corticosterone, respectively, but cannot produce aldosterone. Mechanistically, uses molecular oxygen inserting one oxygen atom into a substrate for hydroxylation and reducing the second into a water molecule. Two electrons are provided by NADPH via a two-protein mitochondrial transfer system comprising flavoprotein FDXR (adrenodoxin/ferredoxin reductase) and nonheme iron-sulfur protein FDX1 or FDX2 (adrenodoxin/ferredoxin). Due to its lack of 18-oxidation activity, it is incapable of generating aldosterone. Could also be involved in the androgen metabolic pathway. The protein is Cytochrome P450 11B1, mitochondrial (CYP11B1) of Papio hamadryas ursinus (Chacma baboon).